Here is a 130-residue protein sequence, read N- to C-terminus: Small ribosomal subunit protein bS6 (130 aa).

Positions 100–130 are disordered; that stretch reads SPMVKAKDERRERREDFAEAGDDVEAGDSEE. Over residues 104-116 the composition is skewed to basic and acidic residues; it reads KAKDERRERREDF. The span at 117-130 shows a compositional bias: acidic residues; that stretch reads AEAGDDVEAGDSEE.

It belongs to the bacterial ribosomal protein bS6 family.

Functionally, binds together with bS18 to 16S ribosomal RNA. The polypeptide is Small ribosomal subunit protein bS6 (Pectobacterium atrosepticum (strain SCRI 1043 / ATCC BAA-672) (Erwinia carotovora subsp. atroseptica)).